Reading from the N-terminus, the 326-residue chain is Ribosomal RNA small subunit methyltransferase H (326 aa).

Residues 35-37, aspartate 53, phenylalanine 80, aspartate 101, and glutamine 108 each bind S-adenosyl-L-methionine; that span reads GGY. The disordered stretch occupies residues 260 to 306; it reads EGVSRHLPQASNAGAGNPPPSFQAVSRRAVKPLDAETRVNPRSRSAR.

Belongs to the methyltransferase superfamily. RsmH family.

It localises to the cytoplasm. The catalysed reaction is cytidine(1402) in 16S rRNA + S-adenosyl-L-methionine = N(4)-methylcytidine(1402) in 16S rRNA + S-adenosyl-L-homocysteine + H(+). Specifically methylates the N4 position of cytidine in position 1402 (C1402) of 16S rRNA. The chain is Ribosomal RNA small subunit methyltransferase H from Rhodospirillum rubrum (strain ATCC 11170 / ATH 1.1.1 / DSM 467 / LMG 4362 / NCIMB 8255 / S1).